A 253-amino-acid chain; its full sequence is Indole-3-glycerol phosphate synthase (253 aa).

Belongs to the TrpC family.

The catalysed reaction is 1-(2-carboxyphenylamino)-1-deoxy-D-ribulose 5-phosphate + H(+) = (1S,2R)-1-C-(indol-3-yl)glycerol 3-phosphate + CO2 + H2O. It functions in the pathway amino-acid biosynthesis; L-tryptophan biosynthesis; L-tryptophan from chorismate: step 4/5. The chain is Indole-3-glycerol phosphate synthase from Bacillus cereus (strain ZK / E33L).